Reading from the N-terminus, the 428-residue chain is Enolase 2 (428 aa).

Gln162 provides a ligand contact to (2R)-2-phosphoglycerate. Glu204 serves as the catalytic Proton donor. Mg(2+) is bound by residues Asp241, Glu285, and Asp312. (2R)-2-phosphoglycerate-binding residues include Lys337, Arg366, Ser367, and Lys388. The Proton acceptor role is filled by Lys337.

It belongs to the enolase family. Requires Mg(2+) as cofactor.

The protein localises to the cytoplasm. It is found in the secreted. Its subcellular location is the cell surface. The catalysed reaction is (2R)-2-phosphoglycerate = phosphoenolpyruvate + H2O. Its pathway is carbohydrate degradation; glycolysis; pyruvate from D-glyceraldehyde 3-phosphate: step 4/5. Functionally, catalyzes the reversible conversion of 2-phosphoglycerate (2-PG) into phosphoenolpyruvate (PEP). It is essential for the degradation of carbohydrates via glycolysis. This is Enolase 2 from Lactobacillus johnsonii (strain CNCM I-12250 / La1 / NCC 533).